We begin with the raw amino-acid sequence, 187 residues long: Oligoribonuclease (187 aa).

One can recognise an Exonuclease domain in the interval 7–170 (LCWLDMEMTG…DDILESIEEM (164 aa)). Tyrosine 128 is an active-site residue.

The protein belongs to the oligoribonuclease family.

The protein resides in the cytoplasm. Its function is as follows. 3'-to-5' exoribonuclease specific for small oligoribonucleotides. The protein is Oligoribonuclease of Neisseria meningitidis serogroup A / serotype 4A (strain DSM 15465 / Z2491).